Here is a 439-residue protein sequence, read N- to C-terminus: Gap junction gamma-2 protein (439 aa).

Topologically, residues 1 to 25 (MTNMSWSFLTRLLEEIHNHSTFVGK) are cytoplasmic. A helical transmembrane segment spans residues 26–46 (VWLTVLVVFRIVLTAVGGEAI). Over 47-78 (YSDEQAKFTCNTRQPGCDNVCYDAFAPLSHVR) the chain is Extracellular. The chain crosses the membrane as a helical span at residues 79–99 (FWVFQIVVISTPSVMYLGYAV). Residues 100-216 (HRLARASEQE…EGLMRVYVAQ (117 aa)) lie on the Cytoplasmic side of the membrane. A disordered region spans residues 108–178 (QERRRALRRR…AEEAGAEEAC (71 aa)). The span at 112–125 (RALRRRPGPRRAPR) shows a compositional bias: basic residues. The span at 140–174 (DLGEEEPMLGLGEEEEEEETGAAEGAGEEAEEAGA) shows a compositional bias: acidic residues. The chain crosses the membrane as a helical span at residues 217–237 (LVARAAFEVAFLVGQYLLYGF). Residues 238–265 (EVRPFFPCSRQPCPHVVDCFVSRPTEKT) lie on the Extracellular side of the membrane. The helical transmembrane segment at 266 to 286 (VFLLVMYVVSCLCLLLNLCEM) threads the bilayer. Residues 287-439 (AHLGLGSAQD…SRDGKTTVWI (153 aa)) lie on the Cytoplasmic side of the membrane. A disordered region spans residues 364 to 439 (AGDRDRDSSP…SRDGKTTVWI (76 aa)). Position 371 is a phosphoserine (serine 371). The segment covering 378–393 (PAASRGPPRAGAPASR) has biased composition (low complexity).

Belongs to the connexin family. Gamma-type subfamily. As to quaternary structure, a connexon is composed of a hexamer of connexins. Interacts with TJP1. In terms of tissue distribution, expressed in central nervous system, in sciatic nerve and sural nerve. Also detected in skeletal muscles.

It is found in the cell membrane. The protein resides in the cell junction. It localises to the gap junction. Its function is as follows. One gap junction consists of a cluster of closely packed pairs of transmembrane channels, the connexons, through which materials of low MW diffuse from one cell to a neighboring cell. May play a role in myelination in central and peripheral nervous systems. The chain is Gap junction gamma-2 protein (GJC2) from Homo sapiens (Human).